A 612-amino-acid polypeptide reads, in one-letter code: UvrABC system protein C (612 aa).

The GIY-YIG domain occupies T20–I98. In terms of domain architecture, UVR spans S208–L243.

It belongs to the UvrC family. In terms of assembly, interacts with UvrB in an incision complex.

Its subcellular location is the cytoplasm. Functionally, the UvrABC repair system catalyzes the recognition and processing of DNA lesions. UvrC both incises the 5' and 3' sides of the lesion. The N-terminal half is responsible for the 3' incision and the C-terminal half is responsible for the 5' incision. The protein is UvrABC system protein C of Francisella tularensis subsp. tularensis (strain WY96-3418).